The following is a 321-amino-acid chain: Gibberellin 2-beta-dioxygenase 4 (321 aa).

The Fe2OG dioxygenase domain maps to D156–P269. Fe cation-binding residues include H193, D195, and H250. The active site involves R260.

The protein belongs to the iron/ascorbate-dependent oxidoreductase family. GA2OX subfamily. Requires Fe(2+) as cofactor. In terms of tissue distribution, expressed at the base of the shoot apical meristem and developing leaf primordia.

The catalysed reaction is gibberellin A1 + 2-oxoglutarate + O2 = gibberellin A8 + succinate + CO2. It participates in plant hormone biosynthesis; gibberellin biosynthesis. Catalyzes the 2-beta-hydroxylation of several biologically active gibberellins, leading to the homeostatic regulation of their endogenous level. Catabolism of gibberellins (GAs) plays a central role in plant development. Converts GA9/GA20 to GA51/GA29 and GA4/GA1 to GA34/GA8. In Arabidopsis thaliana (Mouse-ear cress), this protein is Gibberellin 2-beta-dioxygenase 4 (GA2OX4).